The chain runs to 182 residues: Ribosome-recycling factor (182 aa).

The protein belongs to the RRF family.

Its subcellular location is the cytoplasm. Responsible for the release of ribosomes from messenger RNA at the termination of protein biosynthesis. May increase the efficiency of translation by recycling ribosomes from one round of translation to another. The polypeptide is Ribosome-recycling factor (Nostoc punctiforme (strain ATCC 29133 / PCC 73102)).